The primary structure comprises 408 residues: Phosphatidylinositol transfer protein CSR1 (408 aa).

Ser2 bears the N-acetylserine mark. A Phosphoserine modification is found at Ser2. A CRAL-TRIO domain is found at 157–317 (ETGVIKNLEL…YLGGENDNDL (161 aa)).

It belongs to the PITP family. As to quaternary structure, forms a complex with 2 TSA2 subunits. Binds phosphatidylinositol (PtdIns).

Its subcellular location is the cytoplasm. It is found in the microsome. The protein localises to the endosome. The enzyme catalyses a 1,2-diacyl-sn-glycero-3-phospho-(1D-myo-inositol)(in) = a 1,2-diacyl-sn-glycero-3-phospho-(1D-myo-inositol)(out). Its function is as follows. Non-classical phosphatidylinositol (PtdIns) transfer protein (PITP), which exhibits PtdIns-binding/transfer activity in the absence of detectable PtdCho-binding/transfer activity. Activates SPO14/PLD1 (phospholipase D1) by stimulating phosphoinositide synthesis via the STT4 PtdIns 4-kinase. Modulates ArfGAP function through effects on SPO14 activity. Inhibits phosphatidylcholine degradation by PLB1 (phospholipase B1). May also regulate post-Golgi membrane-trafficking events and have a role resistance to oxidative stress. Inhibits fatty acid synthase activity in response to heme depletion and oleic acid starvation, preventing saturated fatty acid (SFA) accumulation. This is Phosphatidylinositol transfer protein CSR1 (CSR1) from Saccharomyces cerevisiae (strain ATCC 204508 / S288c) (Baker's yeast).